Consider the following 332-residue polypeptide: D-glutamate N-acetyltransferase (332 aa).

The protein belongs to the N-acetyltransferase DgcN family.

The enzyme catalyses D-glutamate + acetyl-CoA = N-acetyl-D-glutamate + CoA + H(+). It catalyses the reaction D-aspartate + acetyl-CoA = N-acetyl-D-aspartate + CoA + H(+). It carries out the reaction D-glutamine + acetyl-CoA = N-acetyl-D-glutamine + CoA + H(+). The protein operates within amino-acid degradation. In terms of biological role, N-acetyltransferase involved in a deamination-independent D-glutamate degradation pathway, named the DgcN-DgcA pathway. Catalyzes the transfer of the acetyl moiety from acetyl-CoA to D-glutamate to generate N-acetyl-D-glutamate. Can also acetylate D-aspartate and D-glutamine, with lower efficiency. Has low activity with D-asparagine. Cannot use succinyl-CoA. The protein is D-glutamate N-acetyltransferase of Pseudoalteromonas sp.